Consider the following 334-residue polypeptide: Beta-hexosaminidase (334 aa).

Substrate contacts are provided by residues Asp-60, Arg-68, Arg-133, and 163 to 164 (KH). The Proton donor/acceptor role is filled by His-176. Catalysis depends on Asp-247, which acts as the Nucleophile.

Belongs to the glycosyl hydrolase 3 family. NagZ subfamily.

Its subcellular location is the cytoplasm. The enzyme catalyses Hydrolysis of terminal non-reducing N-acetyl-D-hexosamine residues in N-acetyl-beta-D-hexosaminides.. It functions in the pathway cell wall biogenesis; peptidoglycan recycling. Its function is as follows. Plays a role in peptidoglycan recycling by cleaving the terminal beta-1,4-linked N-acetylglucosamine (GlcNAc) from peptide-linked peptidoglycan fragments, giving rise to free GlcNAc, anhydro-N-acetylmuramic acid and anhydro-N-acetylmuramic acid-linked peptides. The sequence is that of Beta-hexosaminidase from Xanthomonas oryzae pv. oryzae (strain MAFF 311018).